Consider the following 120-residue polypeptide: Immunoglobulin kappa variable 2D-26 (120 aa).

An N-terminal signal peptide occupies residues 1 to 20 (MRLPAQLLGLLMLWVPGSSA). The interval 21–43 (EIVMTQTPLSLSITPGEQASMSC) is framework-1. Residues 21-120 (EIVMTQTPLS…YYCMQDAQDP (100 aa)) enclose the Ig-like domain. A disulfide bridge links cysteine 43 with cysteine 113. The segment at 44-59 (RSSQSLLHSDGYTYLY) is complementarity-determining-1. Residues 60–74 (WFLQKARPVSTLLIY) are framework-2. Residues 75–81 (EVSNRFS) form a complementarity-determining-2 region. The framework-3 stretch occupies residues 82–113 (GVPDRFSGSGSGTDFTLKISRVEAEDFGVYYC). A complementarity-determining-3 region spans residues 114-120 (MQDAQDP).

As to quaternary structure, immunoglobulins are composed of two identical heavy chains and two identical light chains; disulfide-linked.

The protein resides in the secreted. It is found in the cell membrane. Functionally, v region of the variable domain of immunoglobulin light chains that participates in the antigen recognition. Immunoglobulins, also known as antibodies, are membrane-bound or secreted glycoproteins produced by B lymphocytes. In the recognition phase of humoral immunity, the membrane-bound immunoglobulins serve as receptors which, upon binding of a specific antigen, trigger the clonal expansion and differentiation of B lymphocytes into immunoglobulins-secreting plasma cells. Secreted immunoglobulins mediate the effector phase of humoral immunity, which results in the elimination of bound antigens. The antigen binding site is formed by the variable domain of one heavy chain, together with that of its associated light chain. Thus, each immunoglobulin has two antigen binding sites with remarkable affinity for a particular antigen. The variable domains are assembled by a process called V-(D)-J rearrangement and can then be subjected to somatic hypermutations which, after exposure to antigen and selection, allow affinity maturation for a particular antigen. The sequence is that of Immunoglobulin kappa variable 2D-26 from Homo sapiens (Human).